The primary structure comprises 506 residues: Histidine ammonia-lyase (506 aa).

A cross-link (5-imidazolinone (Ala-Gly)) is located at residues 143 to 145 (ASG). S144 bears the 2,3-didehydroalanine (Ser) mark.

It belongs to the PAL/histidase family. Contains an active site 4-methylidene-imidazol-5-one (MIO), which is formed autocatalytically by cyclization and dehydration of residues Ala-Ser-Gly.

The protein resides in the cytoplasm. It carries out the reaction L-histidine = trans-urocanate + NH4(+). It participates in amino-acid degradation; L-histidine degradation into L-glutamate; N-formimidoyl-L-glutamate from L-histidine: step 1/3. This Salmonella arizonae (strain ATCC BAA-731 / CDC346-86 / RSK2980) protein is Histidine ammonia-lyase.